A 1404-amino-acid chain; its full sequence is DNA-directed RNA polymerase subunit beta' (1404 aa).

Zn(2+) is bound by residues C70, C72, C85, and C88. The Mg(2+) site is built by D460, D462, and D464. Positions 814, 888, 895, and 898 each coordinate Zn(2+).

It belongs to the RNA polymerase beta' chain family. The RNAP catalytic core consists of 2 alpha, 1 beta, 1 beta' and 1 omega subunit. When a sigma factor is associated with the core the holoenzyme is formed, which can initiate transcription. Requires Mg(2+) as cofactor. It depends on Zn(2+) as a cofactor.

The catalysed reaction is RNA(n) + a ribonucleoside 5'-triphosphate = RNA(n+1) + diphosphate. DNA-dependent RNA polymerase catalyzes the transcription of DNA into RNA using the four ribonucleoside triphosphates as substrates. The protein is DNA-directed RNA polymerase subunit beta' of Shewanella loihica (strain ATCC BAA-1088 / PV-4).